Reading from the N-terminus, the 146-residue chain is MAGPLRAPLLLLAILAVALAVSPAAGASPGKPPRLVGGPMDASVEEEGVRRALDFAVSEYNKASNDMYHSRALQVVRARKQIVAGVNYFLDVELGRTTCTKTQPNLDNCPFHEQPHLKRKAFCSFQIYTVPWQGTMTLSKSTCQDA.

An N-terminal signal peptide occupies residues 1–26 (MAGPLRAPLLLLAILAVALAVSPAAG). S43 bears the Phosphoserine mark. The Secondary area of contact motif lies at 81-85 (QIVAG). Cystine bridges form between C99-C109 and C123-C143.

It belongs to the cystatin family.

The protein resides in the secreted. In terms of biological role, as an inhibitor of cysteine proteinases, this protein is thought to serve an important physiological role as a local regulator of this enzyme activity. The polypeptide is Cystatin-C (CST3) (Macaca mulatta (Rhesus macaque)).